Reading from the N-terminus, the 58-residue chain is Large ribosomal subunit protein uL30 (58 aa).

It belongs to the universal ribosomal protein uL30 family. Part of the 50S ribosomal subunit.

The polypeptide is Large ribosomal subunit protein uL30 (Vibrio campbellii (strain ATCC BAA-1116)).